We begin with the raw amino-acid sequence, 324 residues long: Probable peptidylglycine alpha-hydroxylating monooxygenase 1 (324 aa).

The N-terminal stretch at 1 to 22 is a signal peptide; it reads MPRFYLLSSCALLAFATSFCNA. 2 disulfide bridges follow: Cys41/Cys85 and Cys73/Cys101. Residues His66 and His67 each contribute to the Cu cation site. Position 142 (His142) interacts with Cu cation. Asn182 carries N-linked (GlcNAc...) asparagine glycosylation. His207, His209, and Met284 together coordinate Cu cation. A disulfide bond links Cys264 and Cys285.

It belongs to the copper type II ascorbate-dependent monooxygenase family. Requires Cu(2+) as cofactor.

Its subcellular location is the secreted. The catalysed reaction is a [peptide]-C-terminal glycine + 2 L-ascorbate + O2 = a [peptide]-C-terminal (2S)-2-hydroxyglycine + 2 monodehydro-L-ascorbate radical + H2O. Its function is as follows. Monooxygenase that catalyzes an essential reaction in C-terminal alpha-amidation of peptides. Produces an unstable peptidyl(2-hydroxyglycine) intermediate. C-terminal amidation of peptides such as neuropeptides is essential for full biological activity. This chain is Probable peptidylglycine alpha-hydroxylating monooxygenase 1, found in Caenorhabditis elegans.